The chain runs to 342 residues: tRNA-specific 2-thiouridylase MnmA (342 aa).

ATP-binding positions include 6–13 and Leu32; that span reads GMSGGVDS. Cys99 serves as the catalytic Nucleophile. Cys99 and Cys190 are joined by a disulfide. Gly124 serves as a coordination point for ATP. An interaction with tRNA region spans residues 140–142; it reads KDQ. Cys190 acts as the Cysteine persulfide intermediate in catalysis. An interaction with tRNA region spans residues 292-293; sequence RY.

This sequence belongs to the MnmA/TRMU family.

The protein resides in the cytoplasm. The catalysed reaction is S-sulfanyl-L-cysteinyl-[protein] + uridine(34) in tRNA + AH2 + ATP = 2-thiouridine(34) in tRNA + L-cysteinyl-[protein] + A + AMP + diphosphate + H(+). Its function is as follows. Catalyzes the 2-thiolation of uridine at the wobble position (U34) of tRNA, leading to the formation of s(2)U34. The polypeptide is tRNA-specific 2-thiouridylase MnmA (Hydrogenobaculum sp. (strain Y04AAS1)).